A 978-amino-acid polypeptide reads, in one-letter code: NACHT, LRR and PYD domains-containing protein 4E (978 aa).

The Pyrin domain maps to 1-93 (MASFFSDFGL…MERAGREIAG (93 aa)). The 324-residue stretch at 148-471 (HMVFLQGVAG…FHLLKSHVDH (324 aa)) folds into the NACHT domain. 154 to 161 (GVAGIGKS) serves as a coordination point for ATP. LRR repeat units lie at residues 594 to 617 (CSTL…HSYT), 694 to 717 (LLNL…LNQA), 746 to 773 (SKML…LCHP), 802 to 825 (NKTL…VLCG), 859 to 882 (NQNL…LLCD), and 916 to 940 (CKTL…LFEA).

It belongs to the NLRP family.

Its function is as follows. May be involved in inflammation and recognition of cytosolic pathogen-associated molecular patterns (PAMPs) not intercepted by membrane-bound receptors. This is NACHT, LRR and PYD domains-containing protein 4E (Nlrp4e) from Mus musculus (Mouse).